A 685-amino-acid polypeptide reads, in one-letter code: Dammaradiene synthase (685 aa).

PFTB repeat units follow at residues 82–123 (MDKM…RLLN) and 265–308 (IREA…DPVV). The active-site Proton donor is the aspartate 400. 2 PFTB repeats span residues 424 to 465 (ITRC…KAMV) and 621 to 672 (IGHG…ARYR).

This sequence belongs to the terpene cyclase/mutase family.

The enzyme catalyses squalene = dammara-20,24-diene. Its function is as follows. Squalene cyclase producing the tetracyclic triterpene dammaradiene. The protein is Dammaradiene synthase (DCD) of Dryopteris crassirhizoma (Thick stemmed wood fern).